The sequence spans 483 residues: UDP-N-acetylmuramyl-tripeptide synthetase (483 aa).

Ser-43 contributes to the UDP-N-acetyl-alpha-D-muramoyl-L-alanyl-D-glutamate binding site. 116-122 (GTKGKTT) is an ATP binding site. UDP-N-acetyl-alpha-D-muramoyl-L-alanyl-D-glutamate is bound by residues 160–161 (TT), Ser-187, and Arg-195. An N6-carboxylysine modification is found at Lys-229.

The protein belongs to the MurCDEF family. MurE subfamily. In terms of processing, carboxylation is probably crucial for Mg(2+) binding and, consequently, for the gamma-phosphate positioning of ATP.

It localises to the cytoplasm. It functions in the pathway cell wall biogenesis; peptidoglycan biosynthesis. Catalyzes the addition of an amino acid to the nucleotide precursor UDP-N-acetylmuramoyl-L-alanyl-D-glutamate (UMAG) in the biosynthesis of bacterial cell-wall peptidoglycan. In Lactococcus lactis subsp. cremoris (strain SK11), this protein is UDP-N-acetylmuramyl-tripeptide synthetase.